The chain runs to 623 residues: Mu-like prophage FluMu defective tail fiber protein (623 aa).

The protein to phage Mu protein S.

The protein is Mu-like prophage FluMu defective tail fiber protein of Haemophilus influenzae (strain ATCC 51907 / DSM 11121 / KW20 / Rd).